We begin with the raw amino-acid sequence, 775 residues long: DNA polymerase (775 aa).

Belongs to the DNA polymerase type-B family.

It catalyses the reaction DNA(n) + a 2'-deoxyribonucleoside 5'-triphosphate = DNA(n+1) + diphosphate. The chain is DNA polymerase (pol) from Thermococcus sp. (strain 9oN-7).